Here is a 255-residue protein sequence, read N- to C-terminus: tRNA pseudouridine synthase A (255 aa).

Aspartate 43 (nucleophile) is an active-site residue. Residue tyrosine 94 participates in substrate binding.

Belongs to the tRNA pseudouridine synthase TruA family.

The enzyme catalyses uridine(38/39/40) in tRNA = pseudouridine(38/39/40) in tRNA. Formation of pseudouridine at positions 38, 39 and 40 in the anticodon stem and loop of transfer RNAs. The chain is tRNA pseudouridine synthase A from Pyrobaculum neutrophilum (strain DSM 2338 / JCM 9278 / NBRC 100436 / V24Sta) (Thermoproteus neutrophilus).